The sequence spans 475 residues: Putative response regulator NtrX-like (475 aa).

The Response regulatory domain occupies aspartate 5–cysteine 121. Residue aspartate 54 is modified to 4-aspartylphosphate. A Sigma-54 factor interaction domain is found at leucine 143–isoleucine 369. Residues glycine 171–glutamate 178 and alanine 232–glutamate 241 contribute to the ATP site.

Member of the two-component regulatory system RT0550/RT0603. The chain is Putative response regulator NtrX-like from Rickettsia typhi (strain ATCC VR-144 / Wilmington).